The sequence spans 469 residues: Ubiquitin carboxyl-terminal hydrolase MINDY-1 (469 aa).

The disordered stretch occupies residues 1–105 (MEHHQPEHPA…RLQELPQSPR (105 aa)). Positions 23 to 44 (ENHKVLSEPKEHPQDKDAKEAD) are enriched in basic and acidic residues. Phosphoserine is present on serine 103. Cysteine 137 serves as the catalytic Nucleophile. The active-site Proton acceptor is the histidine 319. A ubiquitin-binding domain (UBD) region spans residues 388 to 428 (QVDQDYLIALSLQQQQPPPQGTSGLSDLELAQQLQQEEYQQ). The disordered stretch occupies residues 401 to 469 (QQQPPPQGTS…PKQESDCVLL (69 aa)). The segment covering 415 to 448 (LELAQQLQQEEYQQHQAAQAAPARAPSPQGRGAA) has biased composition (low complexity). Position 441 is a phosphoserine (serine 441). Positions 453 to 469 (AAERRQRPKQESDCVLL) are enriched in basic and acidic residues.

The protein belongs to the MINDY deubiquitinase family. FAM63 subfamily.

The enzyme catalyses Thiol-dependent hydrolysis of ester, thioester, amide, peptide and isopeptide bonds formed by the C-terminal Gly of ubiquitin (a 76-residue protein attached to proteins as an intracellular targeting signal).. Its function is as follows. Hydrolase that can specifically remove 'Lys-48'-linked conjugated ubiquitin from proteins. Has exodeubiquitinase activity and has a preference for long polyubiquitin chains. May play a regulatory role at the level of protein turnover. This Bos taurus (Bovine) protein is Ubiquitin carboxyl-terminal hydrolase MINDY-1 (MINDY1).